The chain runs to 311 residues: Mitochondrial FAD carrier protein FLX1 (311 aa).

Solcar repeat units follow at residues 7–101, 123–210, and 224–310; these read TPLQ…TKEL, MNSL…LKQR, and LTNL…LKHR. The next 6 helical transmembrane spans lie at 13–33, 77–97, 129–149, 183–203, 230–250, and 266–286; these read VISGLSAGSVTTLVVHPLDLL, LSINLFGNAIAWGVYFGLYGV, LSAGASSGLMTAILTNPIWVI, LWKGLVPALFGVSQGALYFAV, IEITSLGKMVSVTLVYPFQLL, and LFPLIKLIIANDGFVGLYKGL.

Belongs to the mitochondrial carrier (TC 2.A.29) family.

The protein localises to the mitochondrion inner membrane. Its function is as follows. Transport of FAD from the cytosol to the mitochondrial matrix. The sequence is that of Mitochondrial FAD carrier protein FLX1 (FLX1) from Saccharomyces cerevisiae (strain ATCC 204508 / S288c) (Baker's yeast).